Reading from the N-terminus, the 29-residue chain is Cyclotide mela-1 (29 aa).

Positions 1–29 form a cross-link, cyclopeptide (Gly-Asp); the sequence is GKYTCGETCFKGKCYTPGCTCSYPICKKD. Disulfide bonds link Cys-5-Cys-19, Cys-9-Cys-21, and Cys-14-Cys-26.

This is a cyclic peptide. In terms of processing, contains 3 disulfide bonds.

Its function is as follows. Probably participates in a plant defense mechanism (Potential). Binds to and induces leakage in phospholipd membranes, particularly ones containing 1-palmitoyl-2-oleophosphatidylethanolamine (POPE). In vitro, displays cytotoxicity against cultured cells but no hemolytic activity towards fresh erythrocytes. Not active against Gram-negative bacterium E.coli ATCC 25922 or Gram-positive bacterium S.aureus ATCC 25923 up to a concentration of 64 uM. This is Cyclotide mela-1 from Melicytus latifolius (Norfolk Island mahoe).